The sequence spans 375 residues: Alcohol dehydrogenase 1B (375 aa).

The residue at position 1 (S1) is an N-acetylserine. Zn(2+) contacts are provided by C46, H67, C97, C100, C103, C111, and C174. Residues 199-204 (GLGGVG), D223, K228, 293-295 (VGV), and R370 each bind NAD(+).

This sequence belongs to the zinc-containing alcohol dehydrogenase family. Class-I subfamily. As to quaternary structure, multimeric (with different ratios of monomers). Zn(2+) is required as a cofactor.

It is found in the cytoplasm. The catalysed reaction is a primary alcohol + NAD(+) = an aldehyde + NADH + H(+). The enzyme catalyses a secondary alcohol + NAD(+) = a ketone + NADH + H(+). In Saara hardwickii (Indian spiny-tailed lizard), this protein is Alcohol dehydrogenase 1B.